Here is a 250-residue protein sequence, read N- to C-terminus: MTITEIRNLLQGEVSSEQLEELRADERKGVQKLLISYEKRQAKRAQAVAQFQDRFSYEKKFWQKSQLVAGVDEVGRGPLAGPVVTAAVILPHNFDLIDVNDSKKLSPKKRKELFPKILAKAVSVSVGLANNDVIDRINIYEADRLAMAHAVQGLKVKPDALLVDAMNVPLNIPQVKLIHGDAKSNSIAAASIVAKVFRDNLMDAYGEVYPEYDFKHNAGYGTREHMEALKKYGPTPIHRRSFAPVSEYEK.

Residues 66 to 250 form the RNase H type-2 domain; sequence QLVAGVDEVG…SFAPVSEYEK (185 aa). A divalent metal cation contacts are provided by D72, E73, and D164.

The protein belongs to the RNase HII family. Mn(2+) is required as a cofactor. It depends on Mg(2+) as a cofactor.

Its subcellular location is the cytoplasm. It catalyses the reaction Endonucleolytic cleavage to 5'-phosphomonoester.. In terms of biological role, endonuclease that specifically degrades the RNA of RNA-DNA hybrids. The protein is Ribonuclease HII of Lactobacillus gasseri (strain ATCC 33323 / DSM 20243 / BCRC 14619 / CIP 102991 / JCM 1131 / KCTC 3163 / NCIMB 11718 / NCTC 13722 / AM63).